Reading from the N-terminus, the 1002-residue chain is Eukaryotic translation initiation factor 5B (1002 aa).

Disordered regions lie at residues M1–A172 and E184–D402. Residues W13–Q23 are compositionally biased toward acidic residues. Polar residues predominate over residues I27–S37. The segment covering E47–A57 has biased composition (low complexity). Basic and acidic residues-rich tracts occupy residues K75 to A111 and Q120 to K154. Positions P155–A172 are enriched in low complexity. 2 stretches are compositionally biased toward basic and acidic residues: residues E184–R252 and A267–P276. Residues K277 to R287 are compositionally biased toward basic residues. The segment covering I297 to E306 has biased composition (basic and acidic residues). Composition is skewed to acidic residues over residues V307 to Q342 and D352 to E370. A compositionally biased stretch (low complexity) spans S381–P398. The region spanning L403–S621 is the tr-type G domain. Phosphoserine is present on S405. A G1 region spans residues G412–T419. D415 contacts K(+). D415 provides a ligand contact to Na(+). Residues D415–K420, Q431, and G437–T439 each bind GTP. T419 is a Mg(2+) binding site. G437 lines the K(+) pocket. Residue G437 coordinates Na(+). The tract at residues G437–Q441 is G2. T439 is a binding site for Mg(2+). The G3 stretch occupies residues D476–G479. GTP-binding positions include N530 to D533 and A599 to V600. The interval N530–D533 is G4. The interval S598 to V600 is G5.

It belongs to the TRAFAC class translation factor GTPase superfamily. Classic translation factor GTPase family. IF-2 subfamily. Requires Na(+) as cofactor. The cofactor is K(+).

It is found in the cytoplasm. It carries out the reaction GTP + H2O = GDP + phosphate + H(+). In terms of biological role, plays a role in translation initiation. Translational GTPase that catalyzes the joining of the 40S and 60S subunits to form the 80S initiation complex with the initiator methionine-tRNA in the P-site base paired to the start codon. GTP binding and hydrolysis induces conformational changes in the enzyme that renders it active for productive interactions with the ribosome. The release of the enzyme after formation of the initiation complex is a prerequisite to form elongation-competent ribosomes. Stimulates 20S pre-rRNA cleavage to mature 18S rRNA by PIN-domain endonuclease NOB1. This Saccharomyces cerevisiae (strain ATCC 204508 / S288c) (Baker's yeast) protein is Eukaryotic translation initiation factor 5B.